We begin with the raw amino-acid sequence, 907 residues long: Valine--tRNA ligase (907 aa).

The 'HIGH' region signature appears at 45 to 55; sequence PNVTGSLHMGH. The 'KMSKS' region motif lies at 554–558; sequence KMSKS. K557 serves as a coordination point for ATP. The stretch at 838–870 forms a coiled coil; sequence GQLIDLEAERARLMKDVSKIEQDIEKLSAKLSN.

The protein belongs to the class-I aminoacyl-tRNA synthetase family. ValS type 1 subfamily. Monomer.

It is found in the cytoplasm. The enzyme catalyses tRNA(Val) + L-valine + ATP = L-valyl-tRNA(Val) + AMP + diphosphate. In terms of biological role, catalyzes the attachment of valine to tRNA(Val). As ValRS can inadvertently accommodate and process structurally similar amino acids such as threonine, to avoid such errors, it has a 'posttransfer' editing activity that hydrolyzes mischarged Thr-tRNA(Val) in a tRNA-dependent manner. In Bartonella henselae (strain ATCC 49882 / DSM 28221 / CCUG 30454 / Houston 1) (Rochalimaea henselae), this protein is Valine--tRNA ligase.